The chain runs to 275 residues: MTLQQQIIKALGAKPQINAEEEIRRSVDFLKSYLQTYPFIKSLVLGISGGQDSTLAGKLCQMAINELRQETGNESLQFIAVRLPYGVQADEQDCQDAIAFIQPDRVLTVNIKGAVLASEQALREAGIELSDFVRGNEKARERMKAQYSIAGMTSGVVVGTDHAAEAITGFFTKYGDGGTDINPLYRLNKRQGKQLLAALGCPEHLYKKAPTADLEDDRPSLPDEVALGVTYDNIDDYLEGKNVPEQVARTIENWYLKTEHKRRPPITVFDDFWKK.

An ATP-binding site is contributed by 46–53; the sequence is GISGGQDS. Asp52 lines the Mg(2+) pocket. Deamido-NAD(+) is bound at residue Arg140. Thr160 provides a ligand contact to ATP. Residue Glu165 coordinates Mg(2+). The deamido-NAD(+) site is built by Lys173 and Asp180. ATP contacts are provided by Lys189 and Thr211. Deamido-NAD(+) is bound at residue 260–261; the sequence is HK.

Belongs to the NAD synthetase family. As to quaternary structure, homodimer.

The catalysed reaction is deamido-NAD(+) + NH4(+) + ATP = AMP + diphosphate + NAD(+) + H(+). Its pathway is cofactor biosynthesis; NAD(+) biosynthesis; NAD(+) from deamido-NAD(+) (ammonia route): step 1/1. Functionally, catalyzes the ATP-dependent amidation of deamido-NAD to form NAD. Uses ammonia as a nitrogen source. The sequence is that of NH(3)-dependent NAD(+) synthetase from Escherichia coli O7:K1 (strain IAI39 / ExPEC).